Consider the following 98-residue polypeptide: NADH-ubiquinone oxidoreductase chain 4L (98 aa).

The next 3 helical transmembrane spans lie at 1–21, 29–49, and 59–79; these read MTAI…GVLV, TLLC…LLIT, and LPLT…ALLV.

The protein belongs to the complex I subunit 4L family. In terms of assembly, core subunit of respiratory chain NADH dehydrogenase (Complex I) which is composed of 45 different subunits.

The protein localises to the mitochondrion inner membrane. The enzyme catalyses a ubiquinone + NADH + 5 H(+)(in) = a ubiquinol + NAD(+) + 4 H(+)(out). Its function is as follows. Core subunit of the mitochondrial membrane respiratory chain NADH dehydrogenase (Complex I) which catalyzes electron transfer from NADH through the respiratory chain, using ubiquinone as an electron acceptor. Part of the enzyme membrane arm which is embedded in the lipid bilayer and involved in proton translocation. This Notoryctes typhlops (Southern marsupial mole) protein is NADH-ubiquinone oxidoreductase chain 4L (MT-ND4L).